Consider the following 309-residue polypeptide: MEILLANPRGFCAGVDRAISIVERALDIFEKPIYVRHEVVHNRYVVDGLKSRGAVFVEELDQIPDDSIVIFSAHGVSQAVRTEAKRRDLKIFDATCPLVTKVHMEVTRASRKGIECILIGHQGHPEVEGTMGQYGNDGGGIYLVETVEDVAKLNVKNADNLFYCSQTTLSVDDTADVIDALRAKFPAIDGPRKDDICYATQNRQDAVRDLADKVDVLLVVGAKNSSNSNRLRELADKMGTKAYLIDDATNVQESWFTGINAVGVTAGASAPEVLVQQVITRLKELGGNQVTENPGEEENIVFAVPIELR.

Residue C12 coordinates [4Fe-4S] cluster. H41 and H74 together coordinate (2E)-4-hydroxy-3-methylbut-2-enyl diphosphate. Dimethylallyl diphosphate-binding residues include H41 and H74. Residues H41 and H74 each contribute to the isopentenyl diphosphate site. Residue C96 coordinates [4Fe-4S] cluster. H124 is a binding site for (2E)-4-hydroxy-3-methylbut-2-enyl diphosphate. H124 is a dimethylallyl diphosphate binding site. H124 provides a ligand contact to isopentenyl diphosphate. E126 (proton donor) is an active-site residue. T167 provides a ligand contact to (2E)-4-hydroxy-3-methylbut-2-enyl diphosphate. Residue C197 participates in [4Fe-4S] cluster binding. (2E)-4-hydroxy-3-methylbut-2-enyl diphosphate contacts are provided by S225, S226, N227, and S269. Positions 225, 226, 227, and 269 each coordinate dimethylallyl diphosphate. Residues S225, S226, N227, and S269 each contribute to the isopentenyl diphosphate site.

It belongs to the IspH family. [4Fe-4S] cluster is required as a cofactor.

The enzyme catalyses isopentenyl diphosphate + 2 oxidized [2Fe-2S]-[ferredoxin] + H2O = (2E)-4-hydroxy-3-methylbut-2-enyl diphosphate + 2 reduced [2Fe-2S]-[ferredoxin] + 2 H(+). The catalysed reaction is dimethylallyl diphosphate + 2 oxidized [2Fe-2S]-[ferredoxin] + H2O = (2E)-4-hydroxy-3-methylbut-2-enyl diphosphate + 2 reduced [2Fe-2S]-[ferredoxin] + 2 H(+). It participates in isoprenoid biosynthesis; dimethylallyl diphosphate biosynthesis; dimethylallyl diphosphate from (2E)-4-hydroxy-3-methylbutenyl diphosphate: step 1/1. The protein operates within isoprenoid biosynthesis; isopentenyl diphosphate biosynthesis via DXP pathway; isopentenyl diphosphate from 1-deoxy-D-xylulose 5-phosphate: step 6/6. Catalyzes the conversion of 1-hydroxy-2-methyl-2-(E)-butenyl 4-diphosphate (HMBPP) into a mixture of isopentenyl diphosphate (IPP) and dimethylallyl diphosphate (DMAPP). Acts in the terminal step of the DOXP/MEP pathway for isoprenoid precursor biosynthesis. The sequence is that of 4-hydroxy-3-methylbut-2-enyl diphosphate reductase from Pseudoalteromonas translucida (strain TAC 125).